We begin with the raw amino-acid sequence, 105 residues long: Probable tetrachloroethene reductive dehalogenase membrane anchor protein (105 aa).

3 helical membrane passes run 3 to 23 (IYDV…QYGI), 35 to 55 (IPLQ…LAWG), and 66 to 86 (AIGM…IITY).

The protein belongs to the PceB family.

It localises to the cell membrane. In terms of biological role, may act as a membrane anchor for the tetrachloroethene reductive dehalogenase PceA. The chain is Probable tetrachloroethene reductive dehalogenase membrane anchor protein from Dehalobacter restrictus (strain DSM 9455 / PER-K23).